We begin with the raw amino-acid sequence, 179 residues long: Peptide deformylase (179 aa).

2 residues coordinate Fe cation: Cys102 and His144. The active site involves Glu145. Residue His148 coordinates Fe cation.

Belongs to the polypeptide deformylase family. Fe(2+) is required as a cofactor.

It catalyses the reaction N-terminal N-formyl-L-methionyl-[peptide] + H2O = N-terminal L-methionyl-[peptide] + formate. Its function is as follows. Removes the formyl group from the N-terminal Met of newly synthesized proteins. Requires at least a dipeptide for an efficient rate of reaction. N-terminal L-methionine is a prerequisite for activity but the enzyme has broad specificity at other positions. In Wolbachia sp. subsp. Brugia malayi (strain TRS), this protein is Peptide deformylase.